Consider the following 249-residue polypeptide: Triosephosphate isomerase (249 aa).

Substrate is bound at residue 9-11; that stretch reads NWK. Histidine 94 acts as the Electrophile in catalysis. Residue glutamate 166 is the Proton acceptor of the active site. Residues glycine 172 and 232–233 contribute to the substrate site; that span reads GG.

Belongs to the triosephosphate isomerase family. In terms of assembly, homodimer.

Its subcellular location is the cytoplasm. The enzyme catalyses D-glyceraldehyde 3-phosphate = dihydroxyacetone phosphate. It functions in the pathway carbohydrate biosynthesis; gluconeogenesis. The protein operates within carbohydrate degradation; glycolysis; D-glyceraldehyde 3-phosphate from glycerone phosphate: step 1/1. Involved in the gluconeogenesis. Catalyzes stereospecifically the conversion of dihydroxyacetone phosphate (DHAP) to D-glyceraldehyde-3-phosphate (G3P). The sequence is that of Triosephosphate isomerase from Xylella fastidiosa (strain M12).